An 81-amino-acid polypeptide reads, in one-letter code: Putative membrane protein insertion efficiency factor (81 aa).

The protein belongs to the UPF0161 family.

Its subcellular location is the cell inner membrane. Could be involved in insertion of integral membrane proteins into the membrane. The sequence is that of Putative membrane protein insertion efficiency factor from Thermotoga maritima (strain ATCC 43589 / DSM 3109 / JCM 10099 / NBRC 100826 / MSB8).